A 97-amino-acid chain; its full sequence is Small ribosomal subunit protein bS20 (97 aa).

Belongs to the bacterial ribosomal protein bS20 family.

Binds directly to 16S ribosomal RNA. This Synechocystis sp. (strain ATCC 27184 / PCC 6803 / Kazusa) protein is Small ribosomal subunit protein bS20.